Consider the following 215-residue polypeptide: UPF0502 protein YceH (215 aa).

Residue K80 is modified to N6-acetyllysine.

It belongs to the UPF0502 family.

The sequence is that of UPF0502 protein YceH from Escherichia coli O81 (strain ED1a).